We begin with the raw amino-acid sequence, 359 residues long: Biotin synthase (359 aa).

The 230-residue stretch at 47–276 (HHGRRVRIHV…EADLRMAGGR (230 aa)) folds into the Radical SAM core domain. Positions 65, 69, and 72 each coordinate [4Fe-4S] cluster. Positions 109, 141, 201, and 271 each coordinate [2Fe-2S] cluster. A disordered region spans residues 320 to 359 (EPVIVEDGPERQTPATADDTPSGDPEAADRRRQPSAGPAG).

It belongs to the radical SAM superfamily. Biotin synthase family. As to quaternary structure, homodimer. [4Fe-4S] cluster is required as a cofactor. It depends on [2Fe-2S] cluster as a cofactor.

The enzyme catalyses (4R,5S)-dethiobiotin + (sulfur carrier)-SH + 2 reduced [2Fe-2S]-[ferredoxin] + 2 S-adenosyl-L-methionine = (sulfur carrier)-H + biotin + 2 5'-deoxyadenosine + 2 L-methionine + 2 oxidized [2Fe-2S]-[ferredoxin]. It functions in the pathway cofactor biosynthesis; biotin biosynthesis; biotin from 7,8-diaminononanoate: step 2/2. Catalyzes the conversion of dethiobiotin (DTB) to biotin by the insertion of a sulfur atom into dethiobiotin via a radical-based mechanism. The protein is Biotin synthase of Salinibacter ruber (strain DSM 13855 / M31).